Consider the following 149-residue polypeptide: MKSTLRISLKAGERIFINGAVLRVDRKVALEFLNDVTFLLENHVLQPEGATTPLRQLYFIAQMILINPEGKDHSTAMFRKSITMLLSCFKNEEILAELKRIDALVSTGRAFDALKAIRGLYAIEDNILNNHEMPPTMVEQIRREIAPWR.

This sequence belongs to the FlbT family.

Its function is as follows. Has a post-transcriptional repressor function in flagellum biogenesis. Associates with the 5'-UTR of fljK mRNA and promotes its degradation. The sequence is that of Probable flagellum biosynthesis repressor protein FlbT from Rhizobium leguminosarum bv. trifolii (strain WSM2304).